Consider the following 172-residue polypeptide: Peptide methionine sulfoxide reductase MsrA 2 (172 aa).

The active site involves C12.

Belongs to the MsrA Met sulfoxide reductase family.

It carries out the reaction L-methionyl-[protein] + [thioredoxin]-disulfide + H2O = L-methionyl-(S)-S-oxide-[protein] + [thioredoxin]-dithiol. The enzyme catalyses [thioredoxin]-disulfide + L-methionine + H2O = L-methionine (S)-S-oxide + [thioredoxin]-dithiol. In terms of biological role, has an important function as a repair enzyme for proteins that have been inactivated by oxidation. Catalyzes the reversible oxidation-reduction of methionine sulfoxide in proteins to methionine. This is Peptide methionine sulfoxide reductase MsrA 2 (msrA2) from Lactococcus lactis subsp. lactis (strain IL1403) (Streptococcus lactis).